The primary structure comprises 341 residues: UDP-3-O-acylglucosamine N-acyltransferase (341 aa).

The Proton acceptor role is filled by His-236.

The protein belongs to the transferase hexapeptide repeat family. LpxD subfamily. As to quaternary structure, homotrimer.

The catalysed reaction is a UDP-3-O-[(3R)-3-hydroxyacyl]-alpha-D-glucosamine + a (3R)-hydroxyacyl-[ACP] = a UDP-2-N,3-O-bis[(3R)-3-hydroxyacyl]-alpha-D-glucosamine + holo-[ACP] + H(+). The protein operates within bacterial outer membrane biogenesis; LPS lipid A biosynthesis. In terms of biological role, catalyzes the N-acylation of UDP-3-O-acylglucosamine using 3-hydroxyacyl-ACP as the acyl donor. Is involved in the biosynthesis of lipid A, a phosphorylated glycolipid that anchors the lipopolysaccharide to the outer membrane of the cell. The chain is UDP-3-O-acylglucosamine N-acyltransferase from Lawsonia intracellularis (strain PHE/MN1-00).